The primary structure comprises 296 residues: Small ribosomal subunit protein uS2 (296 aa).

The interval 245–296 (WEAPAAGFAGATGTGWDGAAGDEWGAAPATTEWAASAAPAAASGEAAKETTW) is disordered. Residues 263 to 289 (AAGDEWGAAPATTEWAASAAPAAASGE) show a composition bias toward low complexity.

Belongs to the universal ribosomal protein uS2 family. As to quaternary structure, component of the small ribosomal subunit. Mature ribosomes consist of a small (40S) and a large (60S) subunit. The 40S subunit contains about 33 different proteins and 1 molecule of RNA (18S). The 60S subunit contains about 49 different proteins and 3 molecules of RNA (25S, 5.8S and 5S). Interacts with RPS21.

It is found in the cytoplasm. Functionally, required for the assembly and/or stability of the 40S ribosomal subunit. Required for the processing of the 20S rRNA-precursor to mature 18S rRNA in a late step of the maturation of 40S ribosomal subunits. The protein is Small ribosomal subunit protein uS2 of Fusarium vanettenii (strain ATCC MYA-4622 / CBS 123669 / FGSC 9596 / NRRL 45880 / 77-13-4) (Fusarium solani subsp. pisi).